A 472-amino-acid polypeptide reads, in one-letter code: tRNA modification GTPase MnmE (472 aa).

Residues R28, E91, and K130 each coordinate (6S)-5-formyl-5,6,7,8-tetrahydrofolate. The TrmE-type G domain occupies 225–391 (GAKVVLAGKT…LSEKAYSVLA (167 aa)). N235 lines the K(+) pocket. Residues 235-240 (NAGKSS), 254-260 (SDIHGTT), and 279-282 (DTAG) contribute to the GTP site. S239 lines the Mg(2+) pocket. Positions 254, 256, and 259 each coordinate K(+). T260 provides a ligand contact to Mg(2+). K472 is a (6S)-5-formyl-5,6,7,8-tetrahydrofolate binding site.

It belongs to the TRAFAC class TrmE-Era-EngA-EngB-Septin-like GTPase superfamily. TrmE GTPase family. As to quaternary structure, homodimer. Heterotetramer of two MnmE and two MnmG subunits. K(+) is required as a cofactor.

It localises to the cytoplasm. Its function is as follows. Exhibits a very high intrinsic GTPase hydrolysis rate. Involved in the addition of a carboxymethylaminomethyl (cmnm) group at the wobble position (U34) of certain tRNAs, forming tRNA-cmnm(5)s(2)U34. The protein is tRNA modification GTPase MnmE of Treponema denticola (strain ATCC 35405 / DSM 14222 / CIP 103919 / JCM 8153 / KCTC 15104).